A 166-amino-acid polypeptide reads, in one-letter code: Small ribosomal subunit protein uS5 (166 aa).

The S5 DRBM domain maps to 11-74 (LQEKLIAVNR…EKARRNMINV (64 aa)).

It belongs to the universal ribosomal protein uS5 family. Part of the 30S ribosomal subunit. Contacts proteins S4 and S8.

With S4 and S12 plays an important role in translational accuracy. Its function is as follows. Located at the back of the 30S subunit body where it stabilizes the conformation of the head with respect to the body. The chain is Small ribosomal subunit protein uS5 from Actinobacillus succinogenes (strain ATCC 55618 / DSM 22257 / CCUG 43843 / 130Z).